The following is a 131-amino-acid chain: Dihydroneopterin aldolase 2 (131 aa).

Substrate is bound by residues E29, Y61, and 80–81; that span reads LE. Catalysis depends on K107, which acts as the Proton donor/acceptor.

This sequence belongs to the DHNA family. Homooctamer. Forms a hollow cylinder assembled from two ring-shaped tetramers. Expressed in roots, leaves, stems and siliques.

The catalysed reaction is 7,8-dihydroneopterin = 6-hydroxymethyl-7,8-dihydropterin + glycolaldehyde. The protein operates within cofactor biosynthesis; tetrahydrofolate biosynthesis; 2-amino-4-hydroxy-6-hydroxymethyl-7,8-dihydropteridine diphosphate from 7,8-dihydroneopterin triphosphate: step 3/4. Catalyzes the conversion of 7,8-dihydroneopterin into 6-hydroxymethyl-7,8-dihydropterin, a biosynthetic precursor of the vitamin tetrahydrofolate. Can use L-threo-dihydroneopterin and D-erythro-dihydroneopterin as substrates for the formation of 6-hydroxymethyldihydropterin, but it can also catalyze the epimerization of carbon 2' of dihydroneopterin and dihydromonapterin. The chain is Dihydroneopterin aldolase 2 from Arabidopsis thaliana (Mouse-ear cress).